Here is a 147-residue protein sequence, read N- to C-terminus: MVHFTVEEKAVITSLWGKVNVEEAGGEALGRLLVVYPWTQRFFDNFGNLSSASAIMGNPKVKAHGKKVLTSLGEAIKNMDDLKGTFAHLSELHCDRLHVDPENFKLLGNELVIVLAKHFGKEFTPQVQAAWQKMVAGVAIALAHKYH.

The region spanning 3-147 is the Globin domain; sequence HFTVEEKAVI…VAIALAHKYH (145 aa). Heme b contacts are provided by H64 and H93.

It belongs to the globin family. In terms of assembly, heterotetramer of two alpha chains and two gamma chains in fetal hemoglobin (Hb F). As to expression, red blood cells.

Gamma chains make up the fetal hemoglobin F, in combination with alpha chains. The polypeptide is Hemoglobin subunit gamma (HBG) (Cheirogaleus medius (Fat-tailed dwarf lemur)).